A 565-amino-acid polypeptide reads, in one-letter code: Proline--tRNA ligase (565 aa).

This sequence belongs to the class-II aminoacyl-tRNA synthetase family. ProS type 1 subfamily. Homodimer.

The protein localises to the cytoplasm. It catalyses the reaction tRNA(Pro) + L-proline + ATP = L-prolyl-tRNA(Pro) + AMP + diphosphate. Catalyzes the attachment of proline to tRNA(Pro) in a two-step reaction: proline is first activated by ATP to form Pro-AMP and then transferred to the acceptor end of tRNA(Pro). As ProRS can inadvertently accommodate and process non-cognate amino acids such as alanine and cysteine, to avoid such errors it has two additional distinct editing activities against alanine. One activity is designated as 'pretransfer' editing and involves the tRNA(Pro)-independent hydrolysis of activated Ala-AMP. The other activity is designated 'posttransfer' editing and involves deacylation of mischarged Ala-tRNA(Pro). The misacylated Cys-tRNA(Pro) is not edited by ProRS. The protein is Proline--tRNA ligase of Hydrogenobaculum sp. (strain Y04AAS1).